The primary structure comprises 558 residues: 2-hydroxy-7-methoxy-5-methyl-1-naphthoate--CoA ligase (558 aa).

Residues 212 to 213 (GG), 329 to 331 (ASR), Val-351, Asp-435, Arg-450, and Lys-542 contribute to the ATP site.

The protein belongs to the ATP-dependent AMP-binding enzyme family.

It carries out the reaction 2-hydroxy-7-methoxy-5-methyl-1-naphthoate + ATP + CoA = 2-hydroxy-7-methoxy-5-methyl-1-naphthoyl-CoA + AMP + diphosphate. It participates in antibiotic biosynthesis. Functionally, catalyzes the activation of 2-hydroxy-7-methoxy-5-methyl-1-naphthoate in the biosynthesis of the naphthoate moiety of the neocarzinostatin chromophore. Also catalyzes the activation of other 1-naphthoic acid analogs such as 2-hydroxy-5-methyl-1-naphthoate or 2,7-dihydroxy-5-methyl-1-naphthoate in vitro. This chain is 2-hydroxy-7-methoxy-5-methyl-1-naphthoate--CoA ligase, found in Streptomyces carzinostaticus.